The sequence spans 509 residues: Histidine ammonia-lyase (509 aa).

A cross-link (5-imidazolinone (Ala-Gly)) is located at residues 144-146 (ASG). The residue at position 145 (S145) is a 2,3-didehydroalanine (Ser).

The protein belongs to the PAL/histidase family. Contains an active site 4-methylidene-imidazol-5-one (MIO), which is formed autocatalytically by cyclization and dehydration of residues Ala-Ser-Gly.

The protein localises to the cytoplasm. The enzyme catalyses L-histidine = trans-urocanate + NH4(+). Its pathway is amino-acid degradation; L-histidine degradation into L-glutamate; N-formimidoyl-L-glutamate from L-histidine: step 1/3. The protein is Histidine ammonia-lyase of Pseudoalteromonas atlantica (strain T6c / ATCC BAA-1087).